The chain runs to 1417 residues: DNA-directed RNA polymerase subunit beta' (1417 aa).

Zn(2+) is bound by residues C68, C70, C83, and C86. Residues D458, D460, and D462 each coordinate Mg(2+). Residues C811, C884, C891, and C894 each coordinate Zn(2+).

Belongs to the RNA polymerase beta' chain family. The RNAP catalytic core consists of 2 alpha, 1 beta, 1 beta' and 1 omega subunit. When a sigma factor is associated with the core the holoenzyme is formed, which can initiate transcription. It depends on Mg(2+) as a cofactor. Zn(2+) is required as a cofactor.

The enzyme catalyses RNA(n) + a ribonucleoside 5'-triphosphate = RNA(n+1) + diphosphate. Its function is as follows. DNA-dependent RNA polymerase catalyzes the transcription of DNA into RNA using the four ribonucleoside triphosphates as substrates. The protein is DNA-directed RNA polymerase subunit beta' of Francisella tularensis subsp. mediasiatica (strain FSC147).